Here is a 794-residue protein sequence, read N- to C-terminus: Hyaluronan mediated motility receptor (794 aa).

The interval 1–87 is disordered; it reads MSFPKAPLKR…SQKNDKDVKR (87 aa). Ser20 bears the Phosphoserine mark. Basic and acidic residues predominate over residues 74-87; the sequence is SKKDSQKNDKDVKR. Asn134, Asn279, Asn446, Asn467, Asn488, Asn509, Asn530, Asn561, and Asn601 each carry an N-linked (GlcNAc...) asparagine glycan. The tract at residues 365-630 is required for interaction with FAM83D; that stretch reads EEMTSEKNVF…ITDLKNQLRQ (266 aa). A run of 5 repeats spans residues 442-462, 463-483, 484-504, 505-525, and 526-546. Positions 442-546 are 5 X 21 AA tandem repeats; sequence QEKYNDTAQS…RDVTAQLESY (105 aa). Hyaluronic acid-binding regions lie at residues 719–729 and 741–750; these read KQKIKHVVKLK and KLRSQLVKRK. Thr784 is modified (phosphothreonine).

As to quaternary structure, interacts with ANKRD26. Interacts with DYNLL1. Interacts with FAM83D/CHICA. As to expression, ubiquitously expressed.

The protein resides in the cell surface. It is found in the cytoplasm. The protein localises to the cytoskeleton. Its subcellular location is the spindle. Its function is as follows. Receptor for hyaluronic acid (HA). Involved in cell motility. When hyaluronan binds to HMMR, the phosphorylation of a number of proteins, including the PTK2/FAK1 occurs. May also be involved in cellular transformation and metastasis formation, and in regulating extracellular-regulated kinase (ERK) activity. May act as a regulator of adipogenesis. This is Hyaluronan mediated motility receptor (Hmmr) from Mus musculus (Mouse).